We begin with the raw amino-acid sequence, 157 residues long: ADP-ribosylation factor-like protein 2-binding protein (157 aa).

This sequence belongs to the ARL2BP family.

The protein localises to the cytoplasm. It localises to the mitochondrion intermembrane space. Its subcellular location is the cytoskeleton. It is found in the microtubule organizing center. The protein resides in the centrosome. The protein localises to the nucleus. It localises to the spindle. Its subcellular location is the cilium basal body. Plays a role as an effector of the ADP-ribosylation factor-like protein 2, ARL2. This chain is ADP-ribosylation factor-like protein 2-binding protein (arl2bp), found in Xenopus tropicalis (Western clawed frog).